A 449-amino-acid chain; its full sequence is Signal recognition particle protein (449 aa).

GTP contacts are provided by residues 109 to 116 (GLQGGGKT), 191 to 195 (DTAGR), and 249 to 252 (SRID).

The protein belongs to the GTP-binding SRP family. SRP54 subfamily. Part of the signal recognition particle protein translocation system, which is composed of SRP and FtsY. SRP is a ribonucleoprotein composed of Ffh and a 4.5S RNA molecule.

It localises to the cytoplasm. The enzyme catalyses GTP + H2O = GDP + phosphate + H(+). In terms of biological role, involved in targeting and insertion of nascent membrane proteins into the cytoplasmic membrane. Binds to the hydrophobic signal sequence of the ribosome-nascent chain (RNC) as it emerges from the ribosomes. The SRP-RNC complex is then targeted to the cytoplasmic membrane where it interacts with the SRP receptor FtsY. Interaction with FtsY leads to the transfer of the RNC complex to the Sec translocase for insertion into the membrane, the hydrolysis of GTP by both Ffh and FtsY, and the dissociation of the SRP-FtsY complex into the individual components. The protein is Signal recognition particle protein of Rickettsia prowazekii (strain Madrid E).